The following is a 670-amino-acid chain: Zinc finger and BTB domain-containing protein 5 (670 aa).

Positions 24–93 (CDCVIVVGNR…MYTSTLMLGE (70 aa)) constitute a BTB domain. Disordered regions lie at residues 158-256 (LSSS…QEDG) and 268-382 (EDAQ…SSTD). The segment covering 170-181 (PMSSSMRSSLDQ) has biased composition (polar residues). Serine 234 carries the phosphoserine modification. A Glycyl lysine isopeptide (Lys-Gly) (interchain with G-Cter in SUMO2) cross-link involves residue lysine 239. Positions 285-295 (SRATQVETSFE) are enriched in polar residues. Glycyl lysine isopeptide (Lys-Gly) (interchain with G-Cter in SUMO2) cross-links involve residues lysine 317 and lysine 325. The span at 345 to 360 (AEGSESVEVEGVVVSA) shows a compositional bias: low complexity. Basic and acidic residues predominate over residues 361–374 (EKIDLSPESSDRSF). Phosphoserine is present on serine 366. Glycyl lysine isopeptide (Lys-Gly) (interchain with G-Cter in SUMO2) cross-links involve residues lysine 399 and lysine 410. Over residues 414–432 (SNFSASQSTDDNLPNTTSD) the composition is skewed to polar residues. Disordered regions lie at residues 414 to 433 (SNFS…TSDC) and 442 to 470 (LLSP…EPAD). Low complexity predominate over residues 444-459 (SPEAGPAGGPSSAPGS). Residues lysine 535, lysine 587, and lysine 590 each participate in a glycyl lysine isopeptide (Lys-Gly) (interchain with G-Cter in SUMO2) cross-link. The segment at 606–628 (YACKICCKTFLTLTDCKKHIRVH) adopts a C2H2-type 1 zinc-finger fold. The C2H2-type 2; atypical zinc-finger motif lies at 634–657 (YACLKCGKRFSQSSHLYKHSKTTC). Residues lysine 638 and lysine 651 each participate in a glycyl lysine isopeptide (Lys-Gly) (interchain with G-Cter in SUMO2) cross-link.

Its subcellular location is the nucleus. Functionally, may be involved in transcriptional regulation. The chain is Zinc finger and BTB domain-containing protein 5 (Zbtb5) from Mus musculus (Mouse).